The following is a 308-amino-acid chain: MASWEAQEELRELLHHLPEDDPPADLTHLLELDEMEPKVLCGENPGDEKLKKQVIKTPPMHPSTVTWHFGYKQKEDQQDNIKMRDWVPDPSKMSKSTCKRLILLGLYQACKAQEIIKMDYDVHWEKSVVNEQYFEVEYNCKMCRTVLHEPMPIMYDPETELWVKPGRLRGPLGSAVYTLKKHYERCLLTLPSLKGTRLPKRRCNPSRRYETFREHPPTRKRRSKEGIPTDQQPSTSNGDPMALLSGPCGPHSIQPPSCLLQELPKPEVGSPEMAVAMSGGPFWEEVYGDSIFATPLGSSEDQLLSQFD.

The DNA-binding element occupies 94 to 203; the sequence is SKSTCKRLIL…KGTRLPKRRC (110 aa). A disordered region spans residues 200 to 242; that stretch reads KRRCNPSRRYETFREHPPTRKRRSKEGIPTDQQPSTSNGDPMA. The segment covering 207–217 has biased composition (basic and acidic residues); the sequence is RRYETFREHPP. A Nuclear localization signal motif is present at residues 217 to 226; that stretch reads PTRKRRSKEG. Residues 228–304 form a transactivation domain region; the sequence is PTDQQPSTSN…PLGSSEDQLL (77 aa). Residues 229–238 show a composition bias toward polar residues; that stretch reads TDQQPSTSNG.

In terms of assembly, homodimer or homomultimer. Forms complexes with the host nuclear factors NFIA, NFIB, NFIC or NFIX.

The protein resides in the host nucleus. In terms of biological role, transcriptional transactivator that activates the viral internal promoter (IP), thereby enhancing its own expression. This transactivation is repressed by nuclear factor I. Also transactivates the long terminal repeat (LTR) promoter, thereby inducing structural gene expression, initiating the late phase of infection. It is therefore a key regulator of viral gene expression. It directly binds to and activates DNA target sites of viral promoters and those of distinct cellular genes. Required for viral replication. The sequence is that of Protein Bel-1 (bel1) from Simian foamy virus type 1 (SFVmac).